Here is a 349-residue protein sequence, read N- to C-terminus: Phosphoribosylformylglycinamidine cyclo-ligase (349 aa).

It belongs to the AIR synthase family.

The protein resides in the cytoplasm. It catalyses the reaction 2-formamido-N(1)-(5-O-phospho-beta-D-ribosyl)acetamidine + ATP = 5-amino-1-(5-phospho-beta-D-ribosyl)imidazole + ADP + phosphate + H(+). The protein operates within purine metabolism; IMP biosynthesis via de novo pathway; 5-amino-1-(5-phospho-D-ribosyl)imidazole from N(2)-formyl-N(1)-(5-phospho-D-ribosyl)glycinamide: step 2/2. This chain is Phosphoribosylformylglycinamidine cyclo-ligase, found in Methanococcus maripaludis (strain C5 / ATCC BAA-1333).